We begin with the raw amino-acid sequence, 281 residues long: Putative outer membrane protein BBA52 (281 aa).

The interval 162-281 is disordered; it reads KRISDNQSKL…FFDSLEDQFI (120 aa). The segment covering 179–196 has biased composition (polar residues); it reads NKSVGSKFSKNSRPSKSP. Acidic residues predominate over residues 219 to 249; sequence EFLDDPSQESDELEREYQDDELESEDPDDGE. Over residues 250 to 262 the composition is skewed to basic and acidic residues; that stretch reads REYQDDRESRDDT. Residues 263-281 are compositionally biased toward acidic residues; sequence FNEDQSEDEFFDSLEDQFI.

It is found in the cell outer membrane. The chain is Putative outer membrane protein BBA52 from Borreliella burgdorferi (strain ATCC 35210 / DSM 4680 / CIP 102532 / B31) (Borrelia burgdorferi).